The following is a 154-amino-acid chain: 6,7-dimethyl-8-ribityllumazine synthase (154 aa).

5-amino-6-(D-ribitylamino)uracil-binding positions include Phe21, 55 to 57, and 79 to 81; these read AFE and CVI. Residue 84–85 participates in (2S)-2-hydroxy-3-oxobutyl phosphate binding; the sequence is AT. The active-site Proton donor is His87. Residue Phe112 coordinates 5-amino-6-(D-ribitylamino)uracil. Arg126 lines the (2S)-2-hydroxy-3-oxobutyl phosphate pocket.

Belongs to the DMRL synthase family. As to quaternary structure, forms an icosahedral capsid composed of 60 subunits, arranged as a dodecamer of pentamers.

The catalysed reaction is (2S)-2-hydroxy-3-oxobutyl phosphate + 5-amino-6-(D-ribitylamino)uracil = 6,7-dimethyl-8-(1-D-ribityl)lumazine + phosphate + 2 H2O + H(+). The protein operates within cofactor biosynthesis; riboflavin biosynthesis; riboflavin from 2-hydroxy-3-oxobutyl phosphate and 5-amino-6-(D-ribitylamino)uracil: step 1/2. Functionally, catalyzes the formation of 6,7-dimethyl-8-ribityllumazine by condensation of 5-amino-6-(D-ribitylamino)uracil with 3,4-dihydroxy-2-butanone 4-phosphate. This is the penultimate step in the biosynthesis of riboflavin. The polypeptide is 6,7-dimethyl-8-ribityllumazine synthase (Staphylococcus aureus (strain Newman)).